Reading from the N-terminus, the 223-residue chain is Cytidylate kinase (223 aa).

17–25 (GPTASGKGT) is an ATP binding site.

Belongs to the cytidylate kinase family. Type 1 subfamily.

Its subcellular location is the cytoplasm. It catalyses the reaction CMP + ATP = CDP + ADP. The enzyme catalyses dCMP + ATP = dCDP + ADP. This Bordetella pertussis (strain Tohama I / ATCC BAA-589 / NCTC 13251) protein is Cytidylate kinase.